We begin with the raw amino-acid sequence, 110 residues long: Small ubiquitin-related modifier 3 (110 aa).

Residues K5 and K7 each participate in a glycyl lysine isopeptide (Lys-Gly) (interchain with G-Cter in SUMO2) cross-link. K11 is covalently cross-linked (Glycyl lysine isopeptide (Lys-Gly) (interchain with G-Cter in SUMO); alternate). Residue K11 forms a Glycyl lysine isopeptide (Lys-Gly) (interchain with G-Cter in SUMO2); alternate linkage. Residues 15–92 (DHINLKVAGQ…IDVFQQQTGG (78 aa)) enclose the Ubiquitin-like domain. The segment covering 88-101 (QQTGGSASRGSVPT) has biased composition (polar residues). Residues 88–110 (QQTGGSASRGSVPTPNRCPDLCY) are disordered. A Glycyl lysine isopeptide (Gly-Lys) (interchain with K-? in acceptor proteins) cross-link involves residue G92. Residues 93-110 (SASRGSVPTPNRCPDLCY) constitute a propeptide that is removed on maturation.

Belongs to the ubiquitin family. SUMO subfamily. In terms of assembly, interacts with SAE2 and UBE2I. Covalently attached to a number of proteins. Interacts with USP25 (via ts SIM domain); the interaction sumoylates USP25 and inhibits its ubiquitin hydrolyzing activity. Interacts with BMAL1. In terms of processing, polymeric chains can be formed through Lys-11 cross-linking. Cleavage of precursor form by SENP1, SENP2 or SENP5 is necessary for function.

It is found in the cytoplasm. It localises to the nucleus. The protein resides in the PML body. Its function is as follows. Ubiquitin-like protein which can be covalently attached to target lysines either as a monomer or as a lysine-linked polymer. Does not seem to be involved in protein degradation and may function as an antagonist of ubiquitin in the degradation process. Plays a role in a number of cellular processes such as nuclear transport, DNA replication and repair, mitosis and signal transduction. Covalent attachment to its substrates requires prior activation by the E1 complex SAE1-SAE2 and linkage to the E2 enzyme UBE2I, and can be promoted by an E3 ligase such as PIAS1-4, RANBP2 or CBX4. Plays a role in the regulation of sumoylation status of SETX. The polypeptide is Small ubiquitin-related modifier 3 (Mus musculus (Mouse)).